Here is a 143-residue protein sequence, read N- to C-terminus: Transcriptional regulator MraZ (143 aa).

2 consecutive SpoVT-AbrB domains span residues 5–47 (TYTP…PRAE) and 76–119 (TDEQ…DAQA).

This sequence belongs to the MraZ family. As to quaternary structure, forms oligomers.

The protein localises to the cytoplasm. The protein resides in the nucleoid. The chain is Transcriptional regulator MraZ from Mycobacterium avium (strain 104).